The following is a 123-amino-acid chain: Small ribosomal subunit protein uS12 (123 aa).

Asp89 carries the post-translational modification 3-methylthioaspartic acid. A disordered region spans residues 102–123 (LDTQGVKDRKQGRSKYGAKRPK). A compositionally biased stretch (basic residues) spans 113 to 123 (GRSKYGAKRPK).

This sequence belongs to the universal ribosomal protein uS12 family. In terms of assembly, part of the 30S ribosomal subunit. Contacts proteins S8 and S17. May interact with IF1 in the 30S initiation complex.

With S4 and S5 plays an important role in translational accuracy. Functionally, interacts with and stabilizes bases of the 16S rRNA that are involved in tRNA selection in the A site and with the mRNA backbone. Located at the interface of the 30S and 50S subunits, it traverses the body of the 30S subunit contacting proteins on the other side and probably holding the rRNA structure together. The combined cluster of proteins S8, S12 and S17 appears to hold together the shoulder and platform of the 30S subunit. The protein is Small ribosomal subunit protein uS12 of Magnetococcus marinus (strain ATCC BAA-1437 / JCM 17883 / MC-1).